We begin with the raw amino-acid sequence, 448 residues long: Methylenetetrahydrofolate--tRNA-(uracil-5-)-methyltransferase TrmFO (448 aa).

Gly10–Gly15 is a binding site for FAD.

Belongs to the MnmG family. TrmFO subfamily. It depends on FAD as a cofactor.

Its subcellular location is the cytoplasm. The catalysed reaction is uridine(54) in tRNA + (6R)-5,10-methylene-5,6,7,8-tetrahydrofolate + NADH + H(+) = 5-methyluridine(54) in tRNA + (6S)-5,6,7,8-tetrahydrofolate + NAD(+). It catalyses the reaction uridine(54) in tRNA + (6R)-5,10-methylene-5,6,7,8-tetrahydrofolate + NADPH + H(+) = 5-methyluridine(54) in tRNA + (6S)-5,6,7,8-tetrahydrofolate + NADP(+). In terms of biological role, catalyzes the folate-dependent formation of 5-methyl-uridine at position 54 (M-5-U54) in all tRNAs. The sequence is that of Methylenetetrahydrofolate--tRNA-(uracil-5-)-methyltransferase TrmFO from Lactococcus lactis subsp. cremoris (strain SK11).